Consider the following 942-residue polypeptide: Lambda-carrageenase (942 aa).

Positions M1 to A25 are cleaved as a signal peptide.

Monomer.

The protein resides in the secreted. The catalysed reaction is Endohydrolysis of (1-&gt;4)-beta-linkages in the backbone of lambda-carrageenan, resulting in the tetrasaccharide alpha-D-Galp2,6S2-(1-&gt;3)-beta-D-Galp2S-(1-&gt;4)-alpha-D-Galp2,6S2-(1-&gt;3)-D-Galp2S.. In terms of biological role, hydrolyzes lambda-carrageenan with inversion of anomeric configuration. Does not hydrolyze iota- and kappa-carrageenans, agarose or porphyran. This is Lambda-carrageenase from Pseudoalteromonas carrageenovora (Alteromonas carrageenovora).